Here is a 351-residue protein sequence, read N- to C-terminus: Histidinol-phosphate aminotransferase (351 aa).

The tract at residues 1–26 (MRFRAELEPLSPYNPPRASQEAAAER) is disordered. The residue at position 223 (Lys-223) is an N6-(pyridoxal phosphate)lysine.

It belongs to the class-II pyridoxal-phosphate-dependent aminotransferase family. Histidinol-phosphate aminotransferase subfamily. In terms of assembly, homodimer. The cofactor is pyridoxal 5'-phosphate.

It catalyses the reaction L-histidinol phosphate + 2-oxoglutarate = 3-(imidazol-4-yl)-2-oxopropyl phosphate + L-glutamate. Its pathway is amino-acid biosynthesis; L-histidine biosynthesis; L-histidine from 5-phospho-alpha-D-ribose 1-diphosphate: step 7/9. This Rubrobacter xylanophilus (strain DSM 9941 / JCM 11954 / NBRC 16129 / PRD-1) protein is Histidinol-phosphate aminotransferase.